The following is a 325-amino-acid chain: Pseudouridylate synthase TRUB2, mitochondrial (325 aa).

The active-site Nucleophile is Asp101. The disordered stretch occupies residues 292–325 (QTEGVSRGNPDREAAEGPIPGPSRGAEGEGELRA).

The protein belongs to the pseudouridine synthase TruB family.

The protein localises to the mitochondrion matrix. The catalysed reaction is a uridine in mRNA = a pseudouridine in mRNA. It carries out the reaction uridine(55) in tRNA = pseudouridine(55) in tRNA. Functionally, minor enzyme contributing to the isomerization of uridine to pseudouridine (pseudouridylation) of specific mitochondrial mRNAs (mt-mRNAs) such as COXI and COXIII mt-mRNAs, modulating the efficiency of mitochondrial protein synthesis without changes in transcript abundance or stability. Also catalyzes pseudouridylation of some tRNAs, including synthesis of pseudouridine(55) from uracil-55, in the psi GC loop of a subset of tRNAs. This chain is Pseudouridylate synthase TRUB2, mitochondrial, found in Xenopus tropicalis (Western clawed frog).